Consider the following 514-residue polypeptide: MKSSLKQWRRLALGLILVWALLFLALLSYFMESRVDDPHAAAALSYTDTRRLTSLQGNPRTIMATHLGLATSSAPSTSSNTQQEQSQEENPSADPQPSPLSQEAYPYPDPQSLAAWSAFGTQDVGSRSTGVSRNRERQEYNQDSPQEDEDEEEEVIGGEEEDEEGGDEGRGRTTKRVARHGSSDPHEYYVPRYKSIVHGLWKGSLSMGMLSPRLQRAMKDYLNNNKHGVAYRGHRKAKQSRQQVLCELKKREKIRTLDGAEMPFSKLGWQKIVPALPLSQIHRPGLKTCAVVTSAGAMLHSGLGKEIDSHDAVLRFNTAPTVGYERDVGNKTTIRIINSQILANPMHRFNRSSLYKNVTLVAWDPAPYTLNLHQWYSNPDYNLFTPYMEYRMRFPSQPFYILHPKYIWQLWDVIQANNLENIQPNPPSSGFIGILLMMSLCEEVHVYEYIPSLRQTDLCHYHERYYDAACTLGAYHPLLYEKMLIQRMNIGSEDELKRKGKVTLPGFNKVHCEP.

The Cytoplasmic portion of the chain corresponds to 1–10 (MKSSLKQWRR). Residues 11–31 (LALGLILVWALLFLALLSYFM) form a helical; Signal-anchor for type II membrane protein membrane-spanning segment. Residues 32–514 (ESRVDDPHAA…PGFNKVHCEP (483 aa)) are Lumenal-facing. The span at 70-92 (ATSSAPSTSSNTQQEQSQEENPS) shows a compositional bias: low complexity. Residues 70 to 183 (ATSSAPSTSS…TKRVARHGSS (114 aa)) are disordered. Positions 119–132 (FGTQDVGSRSTGVS) are enriched in polar residues. Residues 145–166 (PQEDEDEEEEVIGGEEEDEEGG) show a composition bias toward acidic residues. 3 disulfides stabilise this stretch: C246–C512, C289–C441, and C459–C470. Residues N330, N350, and N357 are each glycosylated (N-linked (GlcNAc...) asparagine).

This sequence belongs to the glycosyltransferase 29 family.

The protein localises to the golgi apparatus. It localises to the golgi stack membrane. The catalysed reaction is a beta-D-galactoside + CMP-N-acetyl-beta-neuraminate = an N-acetyl-alpha-neuraminyl-(2-&gt;6)-beta-D-galactosyl derivative + CMP + H(+). Functionally, transfers sialic acid from the donor of substrate CMP-sialic acid to galactose containing acceptor substrates. The protein is Beta-galactoside alpha-2,6-sialyltransferase 2 (st6gal2) of Danio rerio (Zebrafish).